Here is a 251-residue protein sequence, read N- to C-terminus: Small ribosomal subunit protein uS2 (251 aa).

It belongs to the universal ribosomal protein uS2 family.

This Azoarcus sp. (strain BH72) protein is Small ribosomal subunit protein uS2.